A 251-amino-acid chain; its full sequence is Cytochrome c oxidase subunit 2 (251 aa).

Helical transmembrane passes span 42–62 (NIMF…FTIV) and 83–103 (IIWT…SFIL). Positions 186, 221, 223, 225, 229, and 232 each coordinate Cu cation. Position 223 (glutamate 223) interacts with Mg(2+).

Belongs to the cytochrome c oxidase subunit 2 family. Component of the cytochrome c oxidase (complex IV, CIV), a multisubunit enzyme composed of a catalytic core of 3 subunits and several supernumerary subunits. The complex exists as a monomer or a dimer and forms supercomplexes (SCs) in the inner mitochondrial membrane with ubiquinol-cytochrome c oxidoreductase (cytochrome b-c1 complex, complex III, CIII). Cu cation serves as cofactor.

The protein resides in the mitochondrion inner membrane. It catalyses the reaction 4 Fe(II)-[cytochrome c] + O2 + 8 H(+)(in) = 4 Fe(III)-[cytochrome c] + 2 H2O + 4 H(+)(out). Functionally, component of the cytochrome c oxidase, the last enzyme in the mitochondrial electron transport chain which drives oxidative phosphorylation. The respiratory chain contains 3 multisubunit complexes succinate dehydrogenase (complex II, CII), ubiquinol-cytochrome c oxidoreductase (cytochrome b-c1 complex, complex III, CIII) and cytochrome c oxidase (complex IV, CIV), that cooperate to transfer electrons derived from NADH and succinate to molecular oxygen, creating an electrochemical gradient over the inner membrane that drives transmembrane transport and the ATP synthase. Cytochrome c oxidase is the component of the respiratory chain that catalyzes the reduction of oxygen to water. Electrons originating from reduced cytochrome c in the intermembrane space (IMS) are transferred via the dinuclear copper A center (CU(A)) of subunit 2 and heme A of subunit 1 to the active site in subunit 1, a binuclear center (BNC) formed by heme A3 and copper B (CU(B)). The BNC reduces molecular oxygen to 2 water molecules using 4 electrons from cytochrome c in the IMS and 4 protons from the mitochondrial matrix. This is Cytochrome c oxidase subunit 2 (COX2) from Candida glabrata (strain ATCC 2001 / BCRC 20586 / JCM 3761 / NBRC 0622 / NRRL Y-65 / CBS 138) (Yeast).